The chain runs to 394 residues: Glutamyl-tRNA reductase (394 aa).

Substrate-binding positions include 45-48 (TCNR), serine 99, 104-106 (EEQ), and glutamine 110. Cysteine 46 acts as the Nucleophile in catalysis. 175–180 (GLGNIG) serves as a coordination point for NADP(+).

It belongs to the glutamyl-tRNA reductase family. Homodimer.

The catalysed reaction is (S)-4-amino-5-oxopentanoate + tRNA(Glu) + NADP(+) = L-glutamyl-tRNA(Glu) + NADPH + H(+). Its pathway is porphyrin-containing compound metabolism; protoporphyrin-IX biosynthesis; 5-aminolevulinate from L-glutamyl-tRNA(Glu): step 1/2. Its function is as follows. Catalyzes the NADPH-dependent reduction of glutamyl-tRNA(Glu) to glutamate 1-semialdehyde (GSA). This is Glutamyl-tRNA reductase from Caldicellulosiruptor saccharolyticus (strain ATCC 43494 / DSM 8903 / Tp8T 6331).